The following is a 143-amino-acid chain: Large ribosomal subunit protein uL11 (143 aa).

This sequence belongs to the universal ribosomal protein uL11 family. In terms of assembly, part of the ribosomal stalk of the 50S ribosomal subunit. Interacts with L10 and the large rRNA to form the base of the stalk. L10 forms an elongated spine to which L12 dimers bind in a sequential fashion forming a multimeric L10(L12)X complex. Post-translationally, one or more lysine residues are methylated.

In terms of biological role, forms part of the ribosomal stalk which helps the ribosome interact with GTP-bound translation factors. The chain is Large ribosomal subunit protein uL11 from Bordetella pertussis (strain Tohama I / ATCC BAA-589 / NCTC 13251).